We begin with the raw amino-acid sequence, 137 residues long: Ribonuclease VapC51 (137 aa).

Positions 5–120 (YLLDTSVIKR…HYDADFDLIA (116 aa)) constitute a PINc domain. The Mg(2+) site is built by aspartate 8 and aspartate 95.

This sequence belongs to the PINc/VapC protein family. Mg(2+) serves as cofactor.

In terms of biological role, toxic component of a type II toxin-antitoxin (TA) system. An RNase. Its cognate antitoxin is VapB51. The polypeptide is Ribonuclease VapC51 (Mycobacterium tuberculosis (strain ATCC 25618 / H37Rv)).